The chain runs to 142 residues: Small ribosomal subunit protein uS12 (142 aa).

The protein belongs to the universal ribosomal protein uS12 family. In terms of assembly, part of the 30S ribosomal subunit.

With S4 and S5 plays an important role in translational accuracy. Located at the interface of the 30S and 50S subunits. In Methanosarcina mazei (strain ATCC BAA-159 / DSM 3647 / Goe1 / Go1 / JCM 11833 / OCM 88) (Methanosarcina frisia), this protein is Small ribosomal subunit protein uS12.